A 561-amino-acid chain; its full sequence is Long-chain-fatty-acid--CoA ligase (561 aa).

Position 213–224 (Tyr213–Ala224) interacts with ATP.

The protein belongs to the ATP-dependent AMP-binding enzyme family. Mg(2+) is required as a cofactor.

It localises to the membrane. The catalysed reaction is a long-chain fatty acid + ATP + CoA = a long-chain fatty acyl-CoA + AMP + diphosphate. The protein operates within lipid metabolism; fatty acid beta-oxidation. Catalyzes the esterification, concomitant with transport, of exogenous long-chain fatty acids into metabolically active CoA thioesters for subsequent degradation or incorporation into phospholipids. The chain is Long-chain-fatty-acid--CoA ligase (fadD) from Escherichia coli O6:H1 (strain CFT073 / ATCC 700928 / UPEC).